The following is a 173-amino-acid chain: Small ribosomal subunit protein mS25 (173 aa).

This sequence belongs to the mitochondrion-specific ribosomal protein mS25 family. Component of the mitochondrial small ribosomal subunit (mt-SSU). Mature mammalian 55S mitochondrial ribosomes consist of a small (28S) and a large (39S) subunit. The 28S small subunit contains a 12S ribosomal RNA (12S mt-rRNA) and 30 different proteins. The 39S large subunit contains a 16S rRNA (16S mt-rRNA), a copy of mitochondrial valine transfer RNA (mt-tRNA(Val)), which plays an integral structural role, and 52 different proteins.

It localises to the mitochondrion. The protein is Small ribosomal subunit protein mS25 (MRPS25) of Homo sapiens (Human).